The following is a 367-amino-acid chain: Putative methylthioribose-1-phosphate isomerase (367 aa).

Residues 65–67 (RGA), arginine 106, and glutamine 218 contribute to the substrate site. Aspartate 259 acts as the Proton donor in catalysis. Substrate is bound at residue 269 to 270 (NK).

Belongs to the eIF-2B alpha/beta/delta subunits family. MtnA subfamily.

It catalyses the reaction 5-(methylsulfanyl)-alpha-D-ribose 1-phosphate = 5-(methylsulfanyl)-D-ribulose 1-phosphate. In terms of biological role, catalyzes the interconversion of methylthioribose-1-phosphate (MTR-1-P) into methylthioribulose-1-phosphate (MTRu-1-P). In Sulfolobus acidocaldarius (strain ATCC 33909 / DSM 639 / JCM 8929 / NBRC 15157 / NCIMB 11770), this protein is Putative methylthioribose-1-phosphate isomerase.